Reading from the N-terminus, the 493-residue chain is Lysine--tRNA ligase (493 aa).

Glu402 and Glu409 together coordinate Mg(2+).

This sequence belongs to the class-II aminoacyl-tRNA synthetase family. In terms of assembly, homodimer. Requires Mg(2+) as cofactor.

The protein localises to the cytoplasm. It catalyses the reaction tRNA(Lys) + L-lysine + ATP = L-lysyl-tRNA(Lys) + AMP + diphosphate. This is Lysine--tRNA ligase from Fusobacterium nucleatum subsp. nucleatum (strain ATCC 25586 / DSM 15643 / BCRC 10681 / CIP 101130 / JCM 8532 / KCTC 2640 / LMG 13131 / VPI 4355).